The chain runs to 196 residues: Peptide deformylase (196 aa).

Fe cation is bound by residues C105 and H147. The active site involves E148. H151 provides a ligand contact to Fe cation.

Belongs to the polypeptide deformylase family. Requires Fe(2+) as cofactor.

The catalysed reaction is N-terminal N-formyl-L-methionyl-[peptide] + H2O = N-terminal L-methionyl-[peptide] + formate. Functionally, removes the formyl group from the N-terminal Met of newly synthesized proteins. Requires at least a dipeptide for an efficient rate of reaction. N-terminal L-methionine is a prerequisite for activity but the enzyme has broad specificity at other positions. In Christiangramia forsetii (strain DSM 17595 / CGMCC 1.15422 / KT0803) (Gramella forsetii), this protein is Peptide deformylase.